The chain runs to 102 residues: NADH-quinone oxidoreductase subunit K 1 (102 aa).

A run of 3 helical transmembrane segments spans residues 6–26 (LNAY…GVLV), 31–51 (LAIL…FVAF), and 65–85 (FLVI…TVLL).

It belongs to the complex I subunit 4L family. In terms of assembly, NDH-1 is composed of 14 different subunits. Subunits NuoA, H, J, K, L, M, N constitute the membrane sector of the complex.

It localises to the cell membrane. The enzyme catalyses a quinone + NADH + 5 H(+)(in) = a quinol + NAD(+) + 4 H(+)(out). Functionally, NDH-1 shuttles electrons from NADH, via FMN and iron-sulfur (Fe-S) centers, to quinones in the respiratory chain. The immediate electron acceptor for the enzyme in this species is believed to be a menaquinone. Couples the redox reaction to proton translocation (for every two electrons transferred, four hydrogen ions are translocated across the cytoplasmic membrane), and thus conserves the redox energy in a proton gradient. The chain is NADH-quinone oxidoreductase subunit K 1 from Symbiobacterium thermophilum (strain DSM 24528 / JCM 14929 / IAM 14863 / T).